A 537-amino-acid chain; its full sequence is MTLLALKEDRPTPKAVYNWRVYTCAAIASFASCMIGYDSAFIGTTLALPSFTKEFDFASYTPGALALLQSNIVSVYQAGAFFGCLFAYATSYFLGRRKSLIAFSVVFIIGAAIMLAADGQGRGIDPIIAGRVLAGIGVGGASNMVPIYISELAPPAVRGRLVGIYELGWQIGGLVGFWINYGVNTTMAPTRSQWLIPFAVQLIPAGLLFLGSFWIPESPRWLYANGKREEAMKVLCWIRNLEPTDRYIVQEVSFIDADLERYTRQVGNGFWKPFLSLKQRKVQWRFFLGGMLFFWQNGSGINAINYYSPTVFRSIGITGTDTGFLTTGIFGVVKMVLTIIWLLWLVDLVGRRRILFIGAAGGSLCMWFIGAYIKIADPGSNKAEDAKLTSGGIAAIFFFYLWTAFYTPSWNGTPWVINSEMFDQNTRSLGQASAAANNWFWNFIISRFTPQMFIKMEYGVYFFFASLMLLSIVFIYFFLPETKSIPLEAMDRLFEIKPVQNANKNLMAELNFDRNPEREESSSLDDKDRVTQTENAV.

The Cytoplasmic portion of the chain corresponds to 1-26 (MTLLALKEDRPTPKAVYNWRVYTCAA). A helical membrane pass occupies residues 27 to 47 (IASFASCMIGYDSAFIGTTLA). The Extracellular segment spans residues 48–74 (LPSFTKEFDFASYTPGALALLQSNIVS). The chain crosses the membrane as a helical span at residues 75 to 95 (VYQAGAFFGCLFAYATSYFLG). The Cytoplasmic segment spans residues 96–98 (RRK). A helical membrane pass occupies residues 99–119 (SLIAFSVVFIIGAAIMLAADG). At 120–131 (QGRGIDPIIAGR) the chain is on the extracellular side. A helical transmembrane segment spans residues 132 to 152 (VLAGIGVGGASNMVPIYISEL). The Cytoplasmic portion of the chain corresponds to 153 to 160 (APPAVRGR). A helical transmembrane segment spans residues 161–181 (LVGIYELGWQIGGLVGFWINY). Residues 182–195 (GVNTTMAPTRSQWL) lie on the Extracellular side of the membrane. N-linked (GlcNAc...) asparagine glycosylation occurs at Asn-184. Residues 196-216 (IPFAVQLIPAGLLFLGSFWIP) traverse the membrane as a helical segment. At 217–285 (ESPRWLYANG…SLKQRKVQWR (69 aa)) the chain is on the cytoplasmic side. Residues 286–306 (FFLGGMLFFWQNGSGINAINY) form a helical membrane-spanning segment. Over 307–327 (YSPTVFRSIGITGTDTGFLTT) the chain is Extracellular. Residues 328–349 (GIFGVVKMVLTIIWLLWLVDLV) form a helical membrane-spanning segment. Over 350–352 (GRR) the chain is Cytoplasmic. A helical membrane pass occupies residues 353 to 373 (RILFIGAAGGSLCMWFIGAYI). Topologically, residues 374–389 (KIADPGSNKAEDAKLT) are extracellular. A helical membrane pass occupies residues 390–410 (SGGIAAIFFFYLWTAFYTPSW). Residues 411–435 (NGTPWVINSEMFDQNTRSLGQASAA) lie on the Cytoplasmic side of the membrane. A helical transmembrane segment spans residues 436 to 456 (ANNWFWNFIISRFTPQMFIKM). The Extracellular portion of the chain corresponds to 457–458 (EY). The chain crosses the membrane as a helical span at residues 459–479 (GVYFFFASLMLLSIVFIYFFL). At 480-537 (PETKSIPLEAMDRLFEIKPVQNANKNLMAELNFDRNPEREESSSLDDKDRVTQTENAV) the chain is on the cytoplasmic side. A compositionally biased stretch (basic and acidic residues) spans 514 to 531 (RNPEREESSSLDDKDRVT). The segment at 514 to 537 (RNPEREESSSLDDKDRVTQTENAV) is disordered.

Belongs to the major facilitator superfamily. Sugar transporter (TC 2.A.1.1) family.

It is found in the membrane. Its function is as follows. MFS-type transporter; part of the qa gene cluster that mediates the catabolism of quinic acid (QA) and as such, allows the use of QA as a sole carbon source. Involved in the upatke of QA. The qa cluster encodes 3 inducible enymes (qa-2, qa-3 and qa-4) catalyzing the first three reactions in the catabolism of quinic acid to protocatechuic acid (also known as 3,4-Dihydroxybenzoic acid). This is MFS-type transporter qa-x from Neurospora crassa (strain ATCC 24698 / 74-OR23-1A / CBS 708.71 / DSM 1257 / FGSC 987).